Here is a 302-residue protein sequence, read N- to C-terminus: Homoserine kinase (302 aa).

Residue 90–100 coordinates ATP; it reads KPGSGLGSSSA.

The protein belongs to the GHMP kinase family. Homoserine kinase subfamily.

The protein resides in the cytoplasm. It carries out the reaction L-homoserine + ATP = O-phospho-L-homoserine + ADP + H(+). The protein operates within amino-acid biosynthesis; L-threonine biosynthesis; L-threonine from L-aspartate: step 4/5. Functionally, catalyzes the ATP-dependent phosphorylation of L-homoserine to L-homoserine phosphate. The protein is Homoserine kinase of Methanococcus vannielii (strain ATCC 35089 / DSM 1224 / JCM 13029 / OCM 148 / SB).